Consider the following 182-residue polypeptide: MSRRDNLIWIDLEMTGLDPDSDRIIEMAVVVTTSNLELVAEGPVIAVHQPDSVLALMDDWNRNTHGASGLTGRVKGSTIGEADAEKQILDFLAQHVDAGCSPMCGNSIGQDRRFLARYMKDLEKFFHYRNLDVSTLKELARRWRPEVAAGIKKKGSHQALEDIRESVEELRYYREHFLRLTD.

The Exonuclease domain occupies 7 to 170; sequence LIWIDLEMTG…EDIRESVEEL (164 aa). Tyr-128 is a catalytic residue.

The protein belongs to the oligoribonuclease family.

It localises to the cytoplasm. 3'-to-5' exoribonuclease specific for small oligoribonucleotides. The polypeptide is Oligoribonuclease (Hahella chejuensis (strain KCTC 2396)).